We begin with the raw amino-acid sequence, 326 residues long: Triacylglycerol lipase 2 (326 aa).

The short motif at 142–146 (AHSMG) is the (A/G)XSXG lipase motif element.

As to quaternary structure, interacts with MIA40; forms mixed disulfide intermediates with MIA40.

Its subcellular location is the mitochondrion. The protein resides in the mitochondrion intermembrane space. The enzyme catalyses a triacylglycerol + H2O = a diacylglycerol + a fatty acid + H(+). The catalysed reaction is 1,2,3-tri-(9Z-octadecenoyl)-glycerol + H2O = di-(9Z)-octadecenoylglycerol + (9Z)-octadecenoate + H(+). It catalyses the reaction 1,2,3-tributanoylglycerol + H2O = dibutanoylglycerol + butanoate + H(+). It carries out the reaction 1,2,3-trioctanoylglycerol + H2O = dioctanoylglycerol + octanoate + H(+). The enzyme catalyses di-(9Z)-octadecenoylglycerol + H2O = (9Z-octadecenoyl)-glycerol + (9Z)-octadecenoate + H(+). The catalysed reaction is dioctanoylglycerol + H2O = octanoylglycerol + octanoate + H(+). In terms of biological role, mitochondrial triacylglycerol (TAG) lipase with activity toward long-chain diacylglycerols (DAGs) and triacylglycerols (TAGs). Involved in mitochondrial lipid metabolism. The sequence is that of Triacylglycerol lipase 2 (TGL2) from Saccharomyces cerevisiae (strain ATCC 204508 / S288c) (Baker's yeast).